The sequence spans 181 residues: NADH-quinone oxidoreductase subunit B (181 aa).

The [4Fe-4S] cluster site is built by cysteine 45, cysteine 46, cysteine 111, and cysteine 140.

Belongs to the complex I 20 kDa subunit family. NDH-1 is composed of 14 different subunits. Subunits NuoB, C, D, E, F, and G constitute the peripheral sector of the complex. [4Fe-4S] cluster serves as cofactor.

Its subcellular location is the cell inner membrane. The catalysed reaction is a quinone + NADH + 5 H(+)(in) = a quinol + NAD(+) + 4 H(+)(out). Functionally, NDH-1 shuttles electrons from NADH, via FMN and iron-sulfur (Fe-S) centers, to quinones in the respiratory chain. The immediate electron acceptor for the enzyme in this species is believed to be a menaquinone. Couples the redox reaction to proton translocation (for every two electrons transferred, four hydrogen ions are translocated across the cytoplasmic membrane), and thus conserves the redox energy in a proton gradient. The chain is NADH-quinone oxidoreductase subunit B from Flavobacterium psychrophilum (strain ATCC 49511 / DSM 21280 / CIP 103535 / JIP02/86).